A 282-amino-acid polypeptide reads, in one-letter code: Shikimate dehydrogenase (NADP(+)) (282 aa).

Shikimate contacts are provided by residues 18 to 20 (SRS) and Thr65. Lys69 acts as the Proton acceptor in catalysis. Residues Asn90 and Asp106 each coordinate shikimate. NADP(+) is bound by residues 134–138 (GAGGA), 158–163 (NRTAAR), and Ile223. Tyr225 contacts shikimate. Gly246 lines the NADP(+) pocket.

This sequence belongs to the shikimate dehydrogenase family. Homodimer.

The catalysed reaction is shikimate + NADP(+) = 3-dehydroshikimate + NADPH + H(+). The protein operates within metabolic intermediate biosynthesis; chorismate biosynthesis; chorismate from D-erythrose 4-phosphate and phosphoenolpyruvate: step 4/7. Its function is as follows. Involved in the biosynthesis of the chorismate, which leads to the biosynthesis of aromatic amino acids. Catalyzes the reversible NADPH linked reduction of 3-dehydroshikimate (DHSA) to yield shikimate (SA). In Methylobacterium radiotolerans (strain ATCC 27329 / DSM 1819 / JCM 2831 / NBRC 15690 / NCIMB 10815 / 0-1), this protein is Shikimate dehydrogenase (NADP(+)).